Consider the following 350-residue polypeptide: Uroporphyrinogen decarboxylase (350 aa).

Substrate is bound by residues 23–27 (RQAGR), D72, Y149, S204, and H318.

The protein belongs to the uroporphyrinogen decarboxylase family. In terms of assembly, homodimer.

The protein localises to the cytoplasm. It catalyses the reaction uroporphyrinogen III + 4 H(+) = coproporphyrinogen III + 4 CO2. The protein operates within porphyrin-containing compound metabolism; protoporphyrin-IX biosynthesis; coproporphyrinogen-III from 5-aminolevulinate: step 4/4. Functionally, catalyzes the decarboxylation of four acetate groups of uroporphyrinogen-III to yield coproporphyrinogen-III. This is Uroporphyrinogen decarboxylase from Carboxydothermus hydrogenoformans (strain ATCC BAA-161 / DSM 6008 / Z-2901).